The primary structure comprises 485 residues: Probable high-affinity nitrate transporter 2.4 (485 aa).

Transmembrane regions (helical) follow at residues 56–76, 80–100, 119–139, 147–167, 177–197, 215–235, 270–290, 305–327, 341–361, 377–397, 405–425, and 435–455; these read WMSL…LPAM, LVLA…ATLV, GVAS…ASSP, FVAG…SRIF, AVAA…MPVA, VTYL…LAFP, AWLL…MENV, AAGA…GGVA, LWAL…VGRM, VACA…VPFV, VSGM…RLFF, and AISC…LIHF.

Belongs to the major facilitator superfamily. Nitrate/nitrite porter (TC 2.A.1.8) family. Expressed in the base of the lateral root primordia, root-shoot junction zone, leaves, ends of the husk and vascular tissue of the anthers.

The protein localises to the cell membrane. Involved in nitrate transport. The protein is Probable high-affinity nitrate transporter 2.4 (NRT2.4) of Oryza sativa subsp. japonica (Rice).